We begin with the raw amino-acid sequence, 164 residues long: Transcriptional repressor NrdR (164 aa).

Residues cysteine 3–cysteine 34 fold into a zinc finger. The ATP-cone domain maps to leucine 49 to glutamate 139.

It belongs to the NrdR family. Zn(2+) is required as a cofactor.

Functionally, negatively regulates transcription of bacterial ribonucleotide reductase nrd genes and operons by binding to NrdR-boxes. The protein is Transcriptional repressor NrdR of Streptococcus pyogenes serotype M6 (strain ATCC BAA-946 / MGAS10394).